Here is a 232-residue protein sequence, read N- to C-terminus: Small ribosomal subunit protein uS3 (232 aa).

The KH type-2 domain maps to 39–107 (VRQFLIKELA…PAQINIAEVR (69 aa)).

It belongs to the universal ribosomal protein uS3 family. As to quaternary structure, part of the 30S ribosomal subunit. Forms a tight complex with proteins S10 and S14.

In terms of biological role, binds the lower part of the 30S subunit head. Binds mRNA in the 70S ribosome, positioning it for translation. In Serratia proteamaculans (strain 568), this protein is Small ribosomal subunit protein uS3.